Here is a 182-residue protein sequence, read N- to C-terminus: Aralkylamine dehydrogenase light chain (182 aa).

A signal peptide (tat-type signal) is located at residues 1 to 47 (MRWLDKFGESLSRSVAHKTSRRSVLRSVGKLMVGSAFVLPVLPVARA). 7 disulfides stabilise this stretch: cysteine 75–cysteine 140, cysteine 81–cysteine 113, cysteine 88–cysteine 171, cysteine 90–cysteine 138, cysteine 91–cysteine 135, cysteine 98–cysteine 129, and cysteine 130–cysteine 161. Aspartate 84 serves as a coordination point for substrate. Catalysis depends on tryptophan 109, which acts as the Tryptophylquinone 6'-substrate hemiaminal intermediate. Tryptophan 109 is subject to Tryptophylquinone. Positions 109–160 (WIGTCHNPHDGKDYLISYHDCCGKTACGRCQCNTQTRERPGYEFFLHNDVNW) form a cross-link, tryptophan tryptophylquinone (Trp-Trp). Aspartate 128 serves as the catalytic Proton acceptor. Position 156–158 (156–158 (NDV)) interacts with substrate.

This sequence belongs to the aromatic amine dehydrogenase light chain family. As to quaternary structure, heterotetramer of two light and two heavy chains. Binds two azurin molecules per heterotetramer. It depends on tryptophan tryptophylquinone residue as a cofactor. Tryptophan tryptophylquinone (TTQ) is formed by oxidation of the indole ring of a tryptophan to form tryptophylquinone followed by covalent cross-linking with another tryptophan residue. In terms of processing, predicted to be exported by the Tat system. The position of the signal peptide cleavage has been experimentally proven.

The protein resides in the periplasm. It catalyses the reaction an aralkylamine + 2 oxidized [azurin] + H2O = an aromatic aldehyde + 2 reduced [azurin] + NH4(+) + 2 H(+). Its activity is regulated as follows. Irreversibly inhibited by phenylhydrazine, hydroxylamine, semicarbazide, hydrazine and aminoguanidine. Reversibly inhibited by isonicotinic acid hydrazide (isoniazid) and isonicotinic acid 2-isopropyl hydrazide (iproniazid). Functionally, oxidizes primary aromatic amines and, more slowly, some long-chain aliphatic amines, but not methylamine or ethylamine. Uses azurin as an electron acceptor to transfer electrons from the reduced tryptophylquinone cofactor. The chain is Aralkylamine dehydrogenase light chain from Alcaligenes faecalis.